We begin with the raw amino-acid sequence, 137 residues long: TSC22 domain family protein 3 (137 aa).

Residues Met1 to Leu60 form an AP1-binding region. 2 positions are modified to phosphoserine: Asn40 and Val73. The interval Leu76–Leu97 is leucine-zipper. Positions Ala101–Val137 are disordered. Position 102 is a phosphoserine (Ser102). Residues Thr125 and Thr128 each carry the phosphothreonine modification. Residues Thr128–Val137 show a composition bias toward low complexity.

Belongs to the TSC-22/Dip/Bun family. As to quaternary structure, can form homodimers, however it is likely to function as a monomer. Interacts with NFKB1. Interacts (via N-terminus) with JUN and FOS; these interactions inhibit the binding of active AP1 to its target DNA. Interacts with MYOD1. Interacts with HDAC1; this interaction affects HDAC1 activity on MYOG promoter and thus inhibits MYOD1 transcriptional activity. In terms of assembly, interacts with MYOD1. As to expression, expressed in T-cells. Expression inversely correlates with T-cell activation, being higher in resting cells and lower in cells activated by TCR/CD3 triggering (at protein level). Constitutively expressed in lung, intestine, kidney and liver, most probably by resident cells from the macrophage lineage. Expressed in thymus, lymph nodes, bone marrow, spleen, lung and skeletal muscle. In terms of tissue distribution, expressed in spleen and skeletal muscle (at protein level). Expressed in the cortex, medulla and papilla of the kidney. Expressed in the cortex, medulla and papilla of the kidney. As to expression, expressed in spleen and skeletal muscle (at protein level).

Its subcellular location is the cytoplasm. It localises to the nucleus. In terms of biological role, protects T-cells from IL2 deprivation-induced apoptosis through the inhibition of FOXO3A transcriptional activity that leads to the down-regulation of the pro-apoptotic factor BCL2L11. In macrophages, plays a role in the anti-inflammatory and immunosuppressive effects of glucocorticoids and IL10. In T-cells, inhibits anti-CD3-induced NFKB1 nuclear translocation and thereby NFKB1 DNA-binding activities. In vitro, suppresses AP-1 transcription factor complex DNA-binding activities. Its function is as follows. Inhibits myogenic differentiation and mediates anti-myogenic effects of glucocorticoids by binding and regulating MYOD1 and HDAC1 transcriptional activity resulting in reduced expression of MYOG. In Mus musculus (Mouse), this protein is TSC22 domain family protein 3.